We begin with the raw amino-acid sequence, 311 residues long: S-adenosyl-L-methionine-dependent tRNA 4-demethylwyosine synthase (311 aa).

Residues Cys-26, Cys-39, Cys-52, Cys-62, Cys-66, and Cys-69 each coordinate [4Fe-4S] cluster. In terms of domain architecture, Radical SAM core spans 45-283; it reads YGIETHRCIQ…LKLAKMLDEN (239 aa).

The protein belongs to the TYW1 family. As to quaternary structure, monomer. Requires [4Fe-4S] cluster as cofactor.

The protein localises to the cytoplasm. It carries out the reaction N(1)-methylguanosine(37) in tRNA(Phe) + pyruvate + S-adenosyl-L-methionine = 4-demethylwyosine(37) in tRNA(Phe) + 5'-deoxyadenosine + L-methionine + CO2 + H2O. Its function is as follows. Component of the wyosine derivatives biosynthesis pathway that catalyzes the condensation of N-methylguanine with 2 carbon atoms from pyruvate to form the tricyclic 4-demethylwyosine (imG-14) on guanosine-37 of tRNA(Phe). This Methanocaldococcus jannaschii (strain ATCC 43067 / DSM 2661 / JAL-1 / JCM 10045 / NBRC 100440) (Methanococcus jannaschii) protein is S-adenosyl-L-methionine-dependent tRNA 4-demethylwyosine synthase.